A 204-amino-acid chain; its full sequence is MTNVAVLSESELGSEAQRERRKRILDATLAIASKGGYEAVQMRAVAERADVAVGTLYRYFPSKVHLLVSALGREFERIDAKTDRAALAGGTPYQRLNFMVGKLNRAMQRNPLLTEAMTRAFVFADASAAGEVDHVGKLMDSMFARAMSDGEPTEDQYHIARVISDVWLSNLLAWLTRRASATDVSKRLDLAVRLLIGTEEQPKI.

Residues 18–78 (RERRKRILDA…SALGREFERI (61 aa)) form the HTH tetR-type domain. The segment at residues 41 to 60 (QMRAVAERADVAVGTLYRYF) is a DNA-binding region (H-T-H motif).

Homodimer.

Its function is as follows. Controls the expression of genes used for utilizing diverse lipids as energy sources. The polypeptide is HTH-type transcriptional repressor KstR (kstR) (Mycolicibacterium smegmatis (strain ATCC 700084 / mc(2)155) (Mycobacterium smegmatis)).